The primary structure comprises 157 residues: SsrA-binding protein (157 aa).

A disordered region spans residues 133–157 (LHDKRETEKKRDWSREKSRLLRARG). Residues 135 to 151 (DKRETEKKRDWSREKSR) show a composition bias toward basic and acidic residues.

It belongs to the SmpB family.

The protein resides in the cytoplasm. In terms of biological role, required for rescue of stalled ribosomes mediated by trans-translation. Binds to transfer-messenger RNA (tmRNA), required for stable association of tmRNA with ribosomes. tmRNA and SmpB together mimic tRNA shape, replacing the anticodon stem-loop with SmpB. tmRNA is encoded by the ssrA gene; the 2 termini fold to resemble tRNA(Ala) and it encodes a 'tag peptide', a short internal open reading frame. During trans-translation Ala-aminoacylated tmRNA acts like a tRNA, entering the A-site of stalled ribosomes, displacing the stalled mRNA. The ribosome then switches to translate the ORF on the tmRNA; the nascent peptide is terminated with the 'tag peptide' encoded by the tmRNA and targeted for degradation. The ribosome is freed to recommence translation, which seems to be the essential function of trans-translation. The polypeptide is SsrA-binding protein (Afipia carboxidovorans (strain ATCC 49405 / DSM 1227 / KCTC 32145 / OM5) (Oligotropha carboxidovorans)).